A 616-amino-acid polypeptide reads, in one-letter code: MALLQISEPGLSAAPHQRRLAAGIDLGTTNSLVATVRSGQAETLPDHEGRHLLPSVVHYQQQGHTVGYAARDNAAQDTANTISSVKRMMGRSLADIQARYPHLPYRFKASVNGLPMIDTAAGLLNPVRVSADILKALAARASESLSGELDGVVITVPAYFDDAQRQGTKDAARLAGLHVLRLLNEPTAAAIAYGLDSGKEGVIAVYDLGGGTFDISILRLSRGVFEVLATGGDSALGGDDFDHLLADYIREQAGIADRSDNRVQRELLDAAITAKIALSDADTVRVNVAGWQGEITREQFNDLISALVKRTLLACRRALKDAGVEPQDVLEVVMVGGSTRVPLVRERVGEFFGRTPLTAIDPDKVVAIGAAIQADILVGNKPDSEMLLLDVIPLSLGLETMGGLVEKVIPRNTTIPVARAQDFTTFKDGQTAMSIHVMQGERELVQDCRSLARFALRGIPPLPAGGAHIRVTFQVDADGLLSVTAMEKSTGVEASIQVKPSYGLTDGEIASMIKDSMSFAEQDVKARMLAEQKVEAARVLESLTGALTADAALLSAAERQCIDDAAAHLSAVAQGDDVDAIEQAIKNVDKQTQEFAARRMDQSVRRALKGHSVDEV.

The protein belongs to the heat shock protein 70 family.

Chaperone involved in the maturation of iron-sulfur cluster-containing proteins. Has a low intrinsic ATPase activity which is markedly stimulated by HscB. Involved in the maturation of IscU. This Salmonella newport (strain SL254) protein is Chaperone protein HscA.